A 354-amino-acid chain; its full sequence is Threonine synthase (354 aa).

An N6-(pyridoxal phosphate)lysine modification is found at K61. Pyridoxal 5'-phosphate-binding positions include N87, 187–191, and T316; that span reads GNAGN.

Belongs to the threonine synthase family. It depends on pyridoxal 5'-phosphate as a cofactor.

The catalysed reaction is O-phospho-L-homoserine + H2O = L-threonine + phosphate. The protein operates within amino-acid biosynthesis; L-threonine biosynthesis; L-threonine from L-aspartate: step 5/5. Catalyzes the gamma-elimination of phosphate from L-phosphohomoserine and the beta-addition of water to produce L-threonine. This is Threonine synthase (thrC) from Halalkalibacterium halodurans (strain ATCC BAA-125 / DSM 18197 / FERM 7344 / JCM 9153 / C-125) (Bacillus halodurans).